The chain runs to 55 residues: Ferredoxin (55 aa).

2 4Fe-4S ferredoxin-type domains span residues 2–27 and 28–55; these read HIIT…HEGT and GKYE…VKAE. 8 residues coordinate [4Fe-4S] cluster: C8, C11, C14, C18, C37, C40, C43, and C47.

[4Fe-4S] cluster is required as a cofactor.

Its function is as follows. Ferredoxins are iron-sulfur proteins that transfer electrons in a wide variety of metabolic reactions. The chain is Ferredoxin from Thermoanaerobacterium thermosaccharolyticum (Clostridium thermosaccharolyticum).